The primary structure comprises 165 residues: MTLSKNSHKEDQLEEKVLVVNRCSKVVKGGRKFSFSALILVGDGKGRLGYGFAKANELTDAIRKGGEAARKNLITIESLEGDSIPHEVLVDQDGAQLLLKPAKPGTGIVAGSRIRLILEMAGVKNIVAKSLGSNNPMNQVKAAFKALLSLSSRKDVLTRRKVTHD.

Residues 13-76 enclose the S5 DRBM domain; that stretch reads LEEKVLVVNR…EAARKNLITI (64 aa).

The protein belongs to the universal ribosomal protein uS5 family. In terms of assembly, part of the 30S ribosomal subunit. Contacts proteins S4 and S8.

In terms of biological role, with S4 and S12 plays an important role in translational accuracy. Functionally, located at the back of the 30S subunit body where it stabilizes the conformation of the head with respect to the body. This chain is Small ribosomal subunit protein uS5, found in Chlamydia abortus (strain DSM 27085 / S26/3) (Chlamydophila abortus).